Here is a 116-residue protein sequence, read N- to C-terminus: U16-barytoxin-Tl1a (116 aa).

The N-terminal stretch at 1–20 (MKTIIVFLSLLVLATKFGDA) is a signal peptide. A propeptide spanning residues 21–74 (KEGVNQEQKKEVTQNEFRVEYLNEMAAMSLLQQLEAIESALFEKEAGRNSRQKR) is cleaved from the precursor. 3 disulfides stabilise this stretch: C75/C90, C82/C95, and C89/C110.

Belongs to the neurotoxin 14 (magi-1) family. 06 (ICK-Trit) subfamily. In terms of tissue distribution, expressed by the venom gland.

Its subcellular location is the secreted. In terms of biological role, ion channel inhibitor. This is U16-barytoxin-Tl1a from Trittame loki (Brush-footed trapdoor spider).